The chain runs to 75 residues: Antimicrobial peptide ctriporin (75 aa).

A signal peptide spans 1–22 (MDSKYLFVFLIFNVIVIDLCQG). Residue lysine 41 is modified to Lysine amide. A propeptide spanning residues 47–75 (ELGSQYDYLQDFRKRELDLDDLLSKFPDY) is cleaved from the precursor.

Belongs to the non-disulfide-bridged peptide (NDBP) superfamily. Short antimicrobial peptide (group 4) family. Expressed by the venom gland.

It is found in the secreted. It localises to the target cell membrane. Functionally, antimicrobial peptide that acts by breaking the cell wall. Is active against Gram-positive bacteria, fungi and antibiotic-resistant pathogens: S.aureus (MIC=5 ug/ml), M.luteus (MIC=5 ug/ml), B.thuringiensis (MIC=10 ug/ml), B.subtilis (MIC=10 ug/ml), C.albicans (MIC=20 ug/ml), methicillin-resistant S.aureus (MIC=5-10 ug/ml), and penicillin-resistant S.epidermidis (MIC=10 ug/ml). Also shows potent activity against antibiotic-sensitive and -resistant Acinetobacter baumannii (MIC=10-20 uM). Shows cytolytic activity against human erythrocytes. In vivo, is efficient in curing staphylococcal skin infection in mice, when externally applied. This Chaerilus tricostatus (Scorpion) protein is Antimicrobial peptide ctriporin.